Here is a 741-residue protein sequence, read N- to C-terminus: G2 and S phase-expressed protein 1 (741 aa).

Ser-73 bears the Phosphoserine mark. Disordered regions lie at residues 101–120 (EVAQAATPQNPVNQGKETFV), 131–428 (EKEQ…KTVS), and 450–512 (FKVP…STRR). Polar residues predominate over residues 106–120 (ATPQNPVNQGKETFV). A compositionally biased stretch (basic and acidic residues) spans 131–147 (EKEQKRDRSPMSLKRET). Phosphoserine is present on residues Ser-139, Ser-153, Ser-191, and Ser-245. A compositionally biased stretch (polar residues) spans 173–209 (SPVSAGPAQTQSNQGLPCSSQPLPRESSTSQPPSQAG). Over residues 246–261 (IQRTKLVNEKGSQSDV) the composition is skewed to polar residues. A compositionally biased stretch (low complexity) spans 310 to 321 (SSTSGSASSLES). At Ser-311 the chain carries Phosphoserine. Residues 337–355 (QRSSIPASGSQRRTSTSKS) are compositionally biased toward polar residues. Low complexity predominate over residues 360–372 (PAASRQALPAAPA). Residues 398-408 (SPLTQQPQTPE) show a composition bias toward polar residues. The residue at position 460 (Ser-460) is a Phosphoserine. Thr-465 carries the phosphothreonine modification. Ser-476, Ser-493, Ser-509, and Ser-514 each carry phosphoserine. Residues 478–497 (TPASRVVSSTPVRRSSGTTP) show a composition bias toward low complexity. Thr-518 is modified (phosphothreonine). Residues Ser-521, Ser-541, Ser-582, and Ser-599 each carry the phosphoserine modification. The interval 550-640 (LSSEPRRRST…VHGGGCSHTP (91 aa)) is disordered. The segment covering 578 to 593 (QGLSSDESSSPPSSVP) has biased composition (low complexity). Phosphothreonine is present on Thr-696. Residues Ser-720, Ser-726, and Ser-736 each carry the phosphoserine modification.

Post-translationally, phosphorylated in mitosis.

Its subcellular location is the cytoplasm. It is found in the cytoskeleton. May be involved in p53-induced cell cycle arrest in G2/M phase by interfering with microtubule rearrangements that are required to enter mitosis. Overexpression delays G2/M phase progression. The protein is G2 and S phase-expressed protein 1 (Gtse1) of Mus musculus (Mouse).